The primary structure comprises 197 residues: Recombination protein RecR (197 aa).

The C4-type zinc finger occupies 56 to 71 (CNVCFHFSADPICEIC). Residues 79 to 173 (QTICVVADSR…KVTRIAFGLP (95 aa)) form the Toprim domain.

The protein belongs to the RecR family.

Its function is as follows. May play a role in DNA repair. It seems to be involved in an RecBC-independent recombinational process of DNA repair. It may act with RecF and RecO. This is Recombination protein RecR from Rippkaea orientalis (strain PCC 8801 / RF-1) (Cyanothece sp. (strain PCC 8801)).